Here is a 1522-residue protein sequence, read N- to C-terminus: ATP-binding cassette sub-family C member 3 (1522 aa).

The Extracellular portion of the chain corresponds to 1 to 32 (MDRLCGSGELGSKFWDSNLTVYTNTPDLTPCF). Residue N18 is glycosylated (N-linked (GlcNAc...) asparagine). Residues 33-53 (QNSLLAWVPCIYLWAALPCYL) traverse the membrane as a helical segment. Topologically, residues 54–73 (FYLRHHRLGYIVLSCLSRLK) are cytoplasmic. A helical membrane pass occupies residues 74 to 94 (TALGVLLWCISWVDLFYSFHG). The Extracellular portion of the chain corresponds to 95-99 (LVHGS). Residues 100–120 (SPAPVFFITPLLVGITMLLAT) form a helical membrane-spanning segment. At 121–132 (LLIQYERLRGVR) the chain is on the cytoplasmic side. Residues 133 to 153 (SSGVLIIFWLLCVICAIIPFR) traverse the membrane as a helical segment. Topologically, residues 154 to 171 (SKILLALAEGKILDPFRF) are extracellular. The chain crosses the membrane as a helical span at residues 172-192 (TTFYIYFALVLCAFILSCFQE). At 193–301 (KPPLFSPENL…KTKKPSFLRA (109 aa)) the chain is on the cytoplasmic side. Residues 302 to 322 (LVRTFTSSLLMGACFKLIQDL) form a helical membrane-spanning segment. An ABC transmembrane type-1 1 domain is found at 310 to 592 (LLMGACFKLI…LPQLISGMTQ (283 aa)). At 323–347 (SPSSTHSCSASSSGLFRPHGPYWWG) the chain is on the extracellular side. The chain crosses the membrane as a helical span at residues 348–368 (FLLAGLMFVSSTMQTLILHQH). Residues 369 to 424 (YHCIFVMALRIRTAIIGVIYRKALTITNSVKREYTVGEMVNLMSVDAQRFMDVSPF) are Cytoplasmic-facing. A helical membrane pass occupies residues 425–445 (INLLWSAPLQVILAIYFLWQI). The Extracellular portion of the chain corresponds to 446-448 (LGP). A helical transmembrane segment spans residues 449 to 469 (SALAGVAVIVLLIPLNGAVSM). At 470–531 (KMKTYQVQQM…LLRKGAYLQA (62 aa)) the chain is on the cytoplasmic side. Residues 532-552 (ISTFIWVCTPFMVTLITLGVY) traverse the membrane as a helical segment. At 553–574 (VCVDKNNVLDAEKAFVSLSLFN) the chain is on the extracellular side. A helical membrane pass occupies residues 575–595 (ILKIPLNLLPQLISGMTQTSV). Residues 596 to 958 (SLKRIQDFLN…VKLSVYWDYA (363 aa)) are Cytoplasmic-facing. One can recognise an ABC transporter 1 domain in the interval 625-849 (ITIHNGTFSW…DGSFANFLRN (225 aa)). 659 to 666 (GPVGCGKS) is a binding site for ATP. Phosphoserine is present on residues S902 and S905. Residues 959–979 (KSVGLCTTLFICLLYAGQNAV) form a helical membrane-spanning segment. Residues 966-1247 (TLFICLLYAG…MIRTLSDLES (282 aa)) form the ABC transmembrane type-1 2 domain. The Extracellular portion of the chain corresponds to 980–1016 (AIGANVWLSAWTNDVEEHGQQNNTSVRLGVYATLGIL). N-linked (GlcNAc...) asparagine glycosylation is found at N1001 and N1002. Residues 1017-1037 (QGLLVMLSAFTMVVGAIQAAR) traverse the membrane as a helical segment. At 1038 to 1080 (LLHTALLHNQIRAPQSFFDTTPSGRILNRFSKDIYVIHEVLAP) the chain is on the cytoplasmic side. A helical membrane pass occupies residues 1081-1101 (TILMLFNSFYTSISTIVVIVA). S1102 is a topological domain (extracellular). Residues 1103–1123 (TPLFCVVVLPLAVFYGFVQRF) form a helical membrane-spanning segment. At 1124–1194 (YVATSRQLKR…ASNRWLGVHV (71 aa)) the chain is on the cytoplasmic side. The chain crosses the membrane as a helical span at residues 1195–1215 (EFVGNCVVLFSALFAVIGRNS). Over 1216 to 1217 (LN) the chain is Extracellular. The helical transmembrane segment at 1218–1238 (PGLVGLSVSYALQVTLSLNWM) threads the bilayer. The Cytoplasmic portion of the chain corresponds to 1239 to 1522 (IRTLSDLESN…YGMAKDAGLA (284 aa)). Positions 1286–1518 (FRNYSVRYRP…GGIFYGMAKD (233 aa)) constitute an ABC transporter 2 domain. 1318–1325 (GRTGAGKS) contacts ATP.

The protein belongs to the ABC transporter superfamily. ABCC family. Conjugate transporter (TC 3.A.1.208) subfamily. Expressed in lung, ileum, colon and liver. Higher in liver of Eisai hyperbilirubinemic rats.

Its subcellular location is the basolateral cell membrane. It localises to the basal cell membrane. The enzyme catalyses an S-substituted glutathione(in) + ATP + H2O = an S-substituted glutathione(out) + ADP + phosphate + H(+). The catalysed reaction is ATP + H2O + xenobioticSide 1 = ADP + phosphate + xenobioticSide 2.. It carries out the reaction taurocholate(in) + ATP + H2O = taurocholate(out) + ADP + phosphate + H(+). It catalyses the reaction glycocholate(in) + ATP + H2O = glycocholate(out) + ADP + phosphate + H(+). The enzyme catalyses taurolithocholate 3-sulfate(in) + ATP + H2O = taurolithocholate 3-sulfate(out) + ADP + phosphate + H(+). The catalysed reaction is 17beta-estradiol 17-O-(beta-D-glucuronate)(in) + ATP + H2O = 17beta-estradiol 17-O-(beta-D-glucuronate)(out) + ADP + phosphate + H(+). It carries out the reaction dehydroepiandrosterone 3-sulfate(in) + ATP + H2O = dehydroepiandrosterone 3-sulfate(out) + ADP + phosphate + H(+). It catalyses the reaction leukotriene C4(in) + ATP + H2O = leukotriene C4(out) + ADP + phosphate + H(+). The enzyme catalyses (4Z,15Z)-bilirubin IXalpha C8-beta-D-glucuronoside(in) + ATP + H2O = (4Z,15Z)-bilirubin IXalpha C8-beta-D-glucuronoside(out) + ADP + phosphate + H(+). The catalysed reaction is (4Z,15Z)-bilirubin IXalpha C8,C12-beta-D-bisglucuronoside(in) + ATP + H2O = (4Z,15Z)-bilirubin IXalpha C8,C12-beta-D-bisglucuronoside(out) + ADP + phosphate + H(+). It carries out the reaction taurochenodeoxycholate 3-sulfate(in) + ATP + H2O = taurochenodeoxycholate 3-sulfate(out) + ADP + phosphate + H(+). ATP-dependent transporter of the ATP-binding cassette (ABC) family that binds and hydrolyzes ATP to enable active transport of various substrates including many drugs, toxicants and endogenous compound across cell membranes. Transports glucuronide conjugates such as bilirubin diglucuronide, estradiol-17-beta-o-glucuronide and GSH conjugates such as leukotriene C4 (LTC4). Transports also various bile salts (taurocholate, glycocholate, taurochenodeoxycholate-3-sulfate, taurolithocholate- 3-sulfate). Does not contribute substantially to bile salt physiology but provides an alternative route for the export of bile acids and glucuronides from cholestatic hepatocytes. May contribute to regulate the transport of organic compounds in testes across the blood-testis-barrier. The sequence is that of ATP-binding cassette sub-family C member 3 (Abcc3) from Rattus norvegicus (Rat).